The primary structure comprises 338 residues: Isopentenyl-diphosphate delta-isomerase (338 aa).

Residue 13-14 (RK) coordinates substrate. Residues 72-74 (AMT), Ser102, and Asn130 contribute to the FMN site. 102 to 104 (SQR) is a substrate binding site. Gln165 is a binding site for substrate. A Mg(2+)-binding site is contributed by Glu166. FMN is bound by residues Lys197, Thr227, 274-276 (GIR), and 295-296 (AR).

The protein belongs to the IPP isomerase type 2 family. In terms of assembly, homooctamer. Dimer of tetramers. The cofactor is FMN. It depends on NADPH as a cofactor. Requires Mg(2+) as cofactor.

Its subcellular location is the cytoplasm. It catalyses the reaction isopentenyl diphosphate = dimethylallyl diphosphate. Involved in the biosynthesis of isoprenoids. Catalyzes the 1,3-allylic rearrangement of the homoallylic substrate isopentenyl (IPP) to its allylic isomer, dimethylallyl diphosphate (DMAPP). In Deinococcus radiodurans (strain ATCC 13939 / DSM 20539 / JCM 16871 / CCUG 27074 / LMG 4051 / NBRC 15346 / NCIMB 9279 / VKM B-1422 / R1), this protein is Isopentenyl-diphosphate delta-isomerase.